Reading from the N-terminus, the 485-residue chain is Skb1 localization factor 1 (485 aa).

The segment at 1–200 is sufficient for interaction with Skb1; that stretch reads MSSIIQNPIE…VDDSDLTPHT (200 aa). 3 disordered regions span residues 117–230, 286–416, and 446–466; these read NAAN…MSRN, ETQH…LRRS, and TTQE…KPEK. The segment covering 171 to 182 has biased composition (polar residues); the sequence is SRSSRYSKTSDL. Residues 189-198 are compositionally biased toward basic and acidic residues; that stretch reads RFVDDSDLTP. Polar residues-rich tracts occupy residues 218-230 and 341-363; these read GRSS…MSRN and VGSS…QQDS. The residue at position 222 (Ser222) is a Phosphoserine. Basic and acidic residues predominate over residues 371 to 393; sequence SERSYRRVRDQYLSKPRLSDKNR. Residues 394-416 are compositionally biased toward polar residues; it reads YSTFSEFPGQGTPSASQSNLRRS. The segment covering 447–464 has biased composition (basic and acidic residues); sequence TQERKPVVKPDSIKTVKP. Positions 451–485 are required and sufficient for plasma membrane anchoring; lysine-rich, may bind to anionic lipids in the plasma membrane; sequence KPVVKPDSIKTVKPEKKKSKGFFKKLMHKISHIFD. Position 458 is a phosphoserine (Ser458).

As to quaternary structure, interacts with Skb1.

It is found in the cell membrane. Its function is as follows. Acts as a membrane anchor for Skb1 in forming plasma membrane microdomains. Promotes mitotic entry by sequestering mitotic inhibitor Skb1 from its regulatory targets Cdr1 and Wee1. In Schizosaccharomyces pombe (strain 972 / ATCC 24843) (Fission yeast), this protein is Skb1 localization factor 1.